Consider the following 352-residue polypeptide: MTQIKLSTLQTLLPDATFQNSETLKDINFSGLTSLTLAGPSDISFVASKTFVNEAKASKASLLVVSQETAEALSDKAIIIVSKVELTTAKIIRLFFPEKQPSGKRSAQVAIDPSAKIGSNTDIGHFVTIGKDSIIGNDCIIEDGVKIGDRVQIGDGARIGKNCVFFDDTIVGKRFIAFGNSTFGGDGFGFVYAEGKHNKIPQVGRVVIGDDVEVGSNCTIDRGALTDTTIGNGCKFDNMVHVAHNCKVGDHVIIAGQSGLAGSVTLGNNVIIGGACAISDHLTLVDGTIIAGGSSLRTSPKTKDVYVGWDLGLTFPEFQKYRVNIKNIVNLNKWLKRIENIEKKVGIETKES.

His244 serves as the catalytic Proton acceptor.

It belongs to the transferase hexapeptide repeat family. LpxD subfamily. Homotrimer.

It catalyses the reaction a UDP-3-O-[(3R)-3-hydroxyacyl]-alpha-D-glucosamine + a (3R)-hydroxyacyl-[ACP] = a UDP-2-N,3-O-bis[(3R)-3-hydroxyacyl]-alpha-D-glucosamine + holo-[ACP] + H(+). Its pathway is bacterial outer membrane biogenesis; LPS lipid A biosynthesis. Its function is as follows. Catalyzes the N-acylation of UDP-3-O-acylglucosamine using 3-hydroxyacyl-ACP as the acyl donor. Is involved in the biosynthesis of lipid A, a phosphorylated glycolipid that anchors the lipopolysaccharide to the outer membrane of the cell. The polypeptide is UDP-3-O-acylglucosamine N-acyltransferase (Leptospira biflexa serovar Patoc (strain Patoc 1 / Ames)).